The following is a 335-amino-acid chain: Glyceraldehyde-3-phosphate dehydrogenase (335 aa).

NAD(+)-binding positions include 13–14 (RI), D34, M79, and S121. D-glyceraldehyde 3-phosphate is bound by residues 151-153 (SCT), T182, 211-212 (TG), and R234. The active-site Nucleophile is C152. C152 carries the post-translational modification S-nitrosocysteine. N316 is a binding site for NAD(+).

The protein belongs to the glyceraldehyde-3-phosphate dehydrogenase family. As to quaternary structure, homotetramer. S-nitrosylation of Cys-152 leads to translocation to the nucleus.

The protein resides in the cytoplasm. The protein localises to the cytosol. Its subcellular location is the cytoskeleton. It localises to the nucleus. The catalysed reaction is D-glyceraldehyde 3-phosphate + phosphate + NAD(+) = (2R)-3-phospho-glyceroyl phosphate + NADH + H(+). The enzyme catalyses S-nitroso-L-cysteinyl-[GAPDH] + L-cysteinyl-[protein] = L-cysteinyl-[GAPDH] + S-nitroso-L-cysteinyl-[protein]. It functions in the pathway carbohydrate degradation; glycolysis; pyruvate from D-glyceraldehyde 3-phosphate: step 1/5. Functionally, has both glyceraldehyde-3-phosphate dehydrogenase and nitrosylase activities, thereby playing a role in glycolysis and nuclear functions, respectively. Glyceraldehyde-3-phosphate dehydrogenase is a key enzyme in glycolysis that catalyzes the first step of the pathway by converting D-glyceraldehyde 3-phosphate (G3P) into 3-phospho-D-glyceroyl phosphate. Participates in nuclear events including transcription, RNA transport, DNA replication and apoptosis. Nuclear functions are probably due to the nitrosylase activity that mediates cysteine S-nitrosylation of nuclear target proteins such as SIRT1, HDAC2 and PRKDC. This Oncorhynchus mykiss (Rainbow trout) protein is Glyceraldehyde-3-phosphate dehydrogenase (gapdh).